Reading from the N-terminus, the 157-residue chain is Ribosome maturation factor RimP (157 aa).

Belongs to the RimP family.

It localises to the cytoplasm. Required for maturation of 30S ribosomal subunits. This chain is Ribosome maturation factor RimP, found in Geobacillus kaustophilus (strain HTA426).